The primary structure comprises 208 residues: Uracil phosphoribosyltransferase (208 aa).

5-phospho-alpha-D-ribose 1-diphosphate is bound by residues arginine 78, arginine 103, and 130–138 (DPMLATGGS). Uracil contacts are provided by residues isoleucine 193 and 198–200 (GDA). Aspartate 199 contacts 5-phospho-alpha-D-ribose 1-diphosphate.

Belongs to the UPRTase family. Mg(2+) is required as a cofactor.

It carries out the reaction UMP + diphosphate = 5-phospho-alpha-D-ribose 1-diphosphate + uracil. Its pathway is pyrimidine metabolism; UMP biosynthesis via salvage pathway; UMP from uracil: step 1/1. Allosterically activated by GTP. Catalyzes the conversion of uracil and 5-phospho-alpha-D-ribose 1-diphosphate (PRPP) to UMP and diphosphate. The chain is Uracil phosphoribosyltransferase from Neisseria meningitidis serogroup B (strain ATCC BAA-335 / MC58).